The sequence spans 236 residues: Proliferating cell nuclear antigen (236 aa).

The DNA-binding element occupies 31-50 (RCDRNISMGMNLNNMAKMLK).

It belongs to the PCNA family.

Its subcellular location is the nucleus. This protein is an auxiliary protein of DNA polymerase delta and is involved in the control of eukaryotic DNA replication by increasing the polymerase's processibility during elongation of the leading strand. The sequence is that of Proliferating cell nuclear antigen from Glycine max (Soybean).